The sequence spans 260 residues: Carbonic anhydrase 3 (260 aa).

The residue at position 2 (Ala-2) is an N-acetylalanine. In terms of domain architecture, Alpha-carbonic anhydrase spans 3-259 (KEWGYADHNG…LKGRVVRASF (257 aa)). 4 positions are modified to phosphoserine: Ser-29, Ser-43, Ser-50, and Ser-55. The segment at 64–67 (RTCR) is involved in proton transfer. Thr-73 bears the Phosphothreonine mark. The Zn(2+) site is built by His-94, His-96, and His-119. Tyr-127 is subject to Phosphotyrosine. Phosphothreonine is present on residues Thr-129 and Thr-176. S-glutathionyl cysteine occurs at positions 182 and 187. 198–199 (TT) is a substrate binding site. Thr-216 is subject to Phosphothreonine. Ser-219 carries the phosphoserine modification.

It belongs to the alpha-carbonic anhydrase family. Requires Zn(2+) as cofactor. In terms of processing, S-thiolated both by thiol-disulfide exchange with glutathione disulfide and by oxyradical-initiated S-thiolation with reduced glutathione. S-glutathionylated in hepatocytes under oxidative stress.

The protein localises to the cytoplasm. The enzyme catalyses hydrogencarbonate + H(+) = CO2 + H2O. Its activity is regulated as follows. Inhibited by acetazolamide. In terms of biological role, reversible hydration of carbon dioxide. The protein is Carbonic anhydrase 3 (CA3) of Equus caballus (Horse).